The chain runs to 237 residues: Myb-related protein MYBAS1 (237 aa).

HTH myb-type domains lie at 5–57 (REEM…VNYL) and 58–112 (HPGL…RKKA). The segment at residues 33-57 (WDFVAKVSGLNRTGKSCRLRWVNYL) is a DNA-binding region (H-T-H motif). The Bipartite nuclear localization signal 1 motif lies at 62 to 65 (KHGR). The segment at residues 85–108 (WSRIARRLPGRTDNEIKNYWRTHM) is a DNA-binding region (H-T-H motif). The Bipartite nuclear localization signal 2 motif lies at 109-117 (RKKAQERRG).

It is found in the nucleus. Transcription factor. The sequence is that of Myb-related protein MYBAS1 (MYBAS1) from Oryza sativa subsp. japonica (Rice).